A 574-amino-acid polypeptide reads, in one-letter code: Pyruvate kinase PKLR (574 aa).

4 positions are modified to phosphoserine: Ser2, Ser19, Ser26, and Ser43. Arg116 contacts substrate. Residues Asn118, Ser120, Asp156, and Thr157 each coordinate K(+). 118 to 121 is a binding site for ATP; the sequence is NFSH. ATP contacts are provided by Arg163 and Lys250. At Ser292 the chain carries Phosphoserine. Lys313 contributes to the substrate binding site. Glu315 lines the Mn(2+) pocket. The substrate site is built by Gly338, Asp339, and Thr371. Asp339 lines the Mn(2+) pocket. Beta-D-fructose 1,6-bisphosphate contacts are provided by residues 475-480, Trp525, Arg532, and 559-564; these read TTTGRS and RPGSGY.

This sequence belongs to the pyruvate kinase family. Homotetramer. Requires Mg(2+) as cofactor. Mn(2+) is required as a cofactor. The cofactor is K(+).

It carries out the reaction pyruvate + ATP = phosphoenolpyruvate + ADP + H(+). Its pathway is carbohydrate degradation; glycolysis; pyruvate from D-glyceraldehyde 3-phosphate: step 5/5. Allosterically activated by fructose 1,6-bisphosphate. Its function is as follows. Pyruvate kinase that catalyzes the conversion of phosphoenolpyruvate to pyruvate with the synthesis of ATP, and which plays a key role in glycolysis. In Homo sapiens (Human), this protein is Pyruvate kinase PKLR (PKLR).